Consider the following 156-residue polypeptide: SsrA-binding protein (156 aa).

This sequence belongs to the SmpB family.

It localises to the cytoplasm. Its function is as follows. Required for rescue of stalled ribosomes mediated by trans-translation. Binds to transfer-messenger RNA (tmRNA), required for stable association of tmRNA with ribosomes. tmRNA and SmpB together mimic tRNA shape, replacing the anticodon stem-loop with SmpB. tmRNA is encoded by the ssrA gene; the 2 termini fold to resemble tRNA(Ala) and it encodes a 'tag peptide', a short internal open reading frame. During trans-translation Ala-aminoacylated tmRNA acts like a tRNA, entering the A-site of stalled ribosomes, displacing the stalled mRNA. The ribosome then switches to translate the ORF on the tmRNA; the nascent peptide is terminated with the 'tag peptide' encoded by the tmRNA and targeted for degradation. The ribosome is freed to recommence translation, which seems to be the essential function of trans-translation. The protein is SsrA-binding protein of Bacillus pumilus (strain SAFR-032).